Consider the following 571-residue polypeptide: Proline--tRNA ligase (571 aa).

The protein belongs to the class-II aminoacyl-tRNA synthetase family. ProS type 1 subfamily. As to quaternary structure, homodimer.

The protein localises to the cytoplasm. It carries out the reaction tRNA(Pro) + L-proline + ATP = L-prolyl-tRNA(Pro) + AMP + diphosphate. Catalyzes the attachment of proline to tRNA(Pro) in a two-step reaction: proline is first activated by ATP to form Pro-AMP and then transferred to the acceptor end of tRNA(Pro). As ProRS can inadvertently accommodate and process non-cognate amino acids such as alanine and cysteine, to avoid such errors it has two additional distinct editing activities against alanine. One activity is designated as 'pretransfer' editing and involves the tRNA(Pro)-independent hydrolysis of activated Ala-AMP. The other activity is designated 'posttransfer' editing and involves deacylation of mischarged Ala-tRNA(Pro). The misacylated Cys-tRNA(Pro) is not edited by ProRS. This Pseudomonas aeruginosa (strain UCBPP-PA14) protein is Proline--tRNA ligase.